A 196-amino-acid polypeptide reads, in one-letter code: MEVILLERVAKLGQMGELVRVKDGYARNFLLPRGKALRATAANRDKYEHMKADLEARNIAAKAEAAKVAEKIDGHNVIVIRQASETGQLFGSVSVRDIVTSFEAEGVMISRSQILLDAPIKTIGKHAIEVAVHPEVEVGVSVTVARSAEEAERINRGEDISTRREDQDAAAEAIAAAGEFFDPDAVQDDEEQPVEQ.

It belongs to the bacterial ribosomal protein bL9 family.

Its function is as follows. Binds to the 23S rRNA. This Rhodopseudomonas palustris (strain HaA2) protein is Large ribosomal subunit protein bL9.